The sequence spans 431 residues: Probable sodium/metabolite cotransporter BASS3, chloroplastic (431 aa).

A chloroplast-targeting transit peptide spans 1–70; the sequence is MTLIASLSLP…RRNSGLVPVV (70 aa). Helical transmembrane passes span 110 to 130, 145 to 165, 169 to 189, 198 to 218, 238 to 258, 261 to 281, 288 to 308, 325 to 345, and 387 to 407; these read FWSA…LSYP, LGGI…ALAF, VPLS…GVLV, TFYA…SSYA, IASV…VVPV, VAMS…GLVL, VVTL…SLCI, LGLI…GYWF, and VPAA…ASFW.

It belongs to the bile acid:sodium symporter (BASS) (TC 2.A.28) family.

The protein localises to the membrane. It is found in the plastid. The protein resides in the chloroplast envelope. May function as sodium-coupled metabolite transporter across the chloroplast envelope. The protein is Probable sodium/metabolite cotransporter BASS3, chloroplastic (BASS3) of Arabidopsis thaliana (Mouse-ear cress).